We begin with the raw amino-acid sequence, 299 residues long: Probable lipid kinase YegS (299 aa).

Residues A2–T133 enclose the DAGKc domain. ATP contacts are provided by residues T40, G66 to E72, and T95. Residues L215, D218, and L220 each contribute to the Mg(2+) site. The active-site Proton acceptor is the E271.

This sequence belongs to the diacylglycerol/lipid kinase family. YegS lipid kinase subfamily. Mg(2+) serves as cofactor. Requires Ca(2+) as cofactor.

The protein localises to the cytoplasm. Functionally, probably phosphorylates lipids; the in vivo substrate is unknown. The chain is Probable lipid kinase YegS from Shigella boydii serotype 18 (strain CDC 3083-94 / BS512).